The chain runs to 478 residues: MRVLFVASEAHPFIKSGGLGDVAGALPKELARKGVDVRVVIPKYREINNELKNKLRFNKWFNVDVGWRNQYCGILEYEYDGVIYYFVDNEYYFSRGGMYGHYDDAERFAFFDRAVLDMIKQLDWKPNIIHCNDWQTGMIPVLLKLEYMRKDMFYWDIKSVFSIHNIAFQGVFDPVILPELFGYDYEQYTNTNLKFDDGVGFMKGAINYSDMITTVSYSYAEEIKTPEFGERLDWLLREKSYMLRGILNGIDYDEFNPKNDNLINKNYDVNNINDKYENKRNLQSELGLNVNENIPIIAMVTRLTSQKGLDLLVNISERLLQNDIQLVIVGTGDKHYEDHFKWLDYKYGNKVSANIRFDNNLAHKVYAASDMFLMPSLFEPCGLGQLIALRYGSIPIVRETGGLKDTIRAYNEYTGEGNGFSFYNYNADELLHIIEYALKIYYDKNKWSNLVKNAMNSNNSWSKSADEYLNMYKELSYR.

Lysine 15 contacts ADP-alpha-D-glucose.

This sequence belongs to the glycosyltransferase 1 family. Bacterial/plant glycogen synthase subfamily.

It catalyses the reaction [(1-&gt;4)-alpha-D-glucosyl](n) + ADP-alpha-D-glucose = [(1-&gt;4)-alpha-D-glucosyl](n+1) + ADP + H(+). The protein operates within glycan biosynthesis; glycogen biosynthesis. Synthesizes alpha-1,4-glucan chains using ADP-glucose. This Clostridium botulinum (strain Alaska E43 / Type E3) protein is Glycogen synthase.